The chain runs to 296 residues: m7GpppN-mRNA hydrolase NUDT17 (296 aa).

In terms of domain architecture, Nudix hydrolase spans 90–236; it reads GRGVDVGVAV…DSGSPCGPLP (147 aa). Positions 129–150 match the Nudix box motif; the sequence is GHVELGEQLLEAGLRELQEETG. Positions 144 and 148 each coordinate Mg(2+).

This sequence belongs to the Nudix hydrolase family. Mg(2+) is required as a cofactor. The cofactor is Mn(2+).

The catalysed reaction is a 5'-end (N(7)-methyl 5'-triphosphoguanosine)-ribonucleoside in mRNA + H2O = N(7)-methyl-GDP + a 5'-end phospho-ribonucleoside in mRNA + 2 H(+). In terms of biological role, acts as a decapping enzyme capable of hydrolyzing monomethylated capped RNAs (in vitro). Hydrolyzes monomethylated capped RNA after alpha and beta phosphates to form N(7)-methyl-GDP. Shows low activity towards unmethylated capped RNA. The chain is m7GpppN-mRNA hydrolase NUDT17 (nudt17) from Xenopus laevis (African clawed frog).